The primary structure comprises 233 residues: Large ribosomal subunit protein uL1 (233 aa).

The protein belongs to the universal ribosomal protein uL1 family. Part of the 50S ribosomal subunit.

Its function is as follows. Binds directly to 23S rRNA. The L1 stalk is quite mobile in the ribosome, and is involved in E site tRNA release. Functionally, protein L1 is also a translational repressor protein, it controls the translation of the L11 operon by binding to its mRNA. The polypeptide is Large ribosomal subunit protein uL1 (Campylobacter curvus (strain 525.92)).